The sequence spans 69 residues: Putative membrane protein insertion efficiency factor (69 aa).

Belongs to the UPF0161 family.

It is found in the cell membrane. Could be involved in insertion of integral membrane proteins into the membrane. The protein is Putative membrane protein insertion efficiency factor of Alkaliphilus oremlandii (strain OhILAs) (Clostridium oremlandii (strain OhILAs)).